The primary structure comprises 364 residues: Lipoyl synthase, mitochondrial (364 aa).

[4Fe-4S] cluster-binding residues include Cys99, Cys104, Cys110, Cys130, Cys134, Cys137, and Ser345. In terms of domain architecture, Radical SAM core spans 116-334; that stretch reads HSTQTATIML…EQRGNELGFL (219 aa).

This sequence belongs to the radical SAM superfamily. Lipoyl synthase family. It depends on [4Fe-4S] cluster as a cofactor.

The protein resides in the mitochondrion. The catalysed reaction is [[Fe-S] cluster scaffold protein carrying a second [4Fe-4S](2+) cluster] + N(6)-octanoyl-L-lysyl-[protein] + 2 oxidized [2Fe-2S]-[ferredoxin] + 2 S-adenosyl-L-methionine + 4 H(+) = [[Fe-S] cluster scaffold protein] + N(6)-[(R)-dihydrolipoyl]-L-lysyl-[protein] + 4 Fe(3+) + 2 hydrogen sulfide + 2 5'-deoxyadenosine + 2 L-methionine + 2 reduced [2Fe-2S]-[ferredoxin]. It functions in the pathway protein modification; protein lipoylation via endogenous pathway; protein N(6)-(lipoyl)lysine from octanoyl-[acyl-carrier-protein]: step 2/2. Functionally, catalyzes the radical-mediated insertion of two sulfur atoms into the C-6 and C-8 positions of the octanoyl moiety bound to the lipoyl domains of lipoate-dependent enzymes, thereby converting the octanoylated domains into lipoylated derivatives. The sequence is that of Lipoyl synthase, mitochondrial from Drosophila mojavensis (Fruit fly).